A 320-amino-acid polypeptide reads, in one-letter code: Cytochrome f (320 aa).

The N-terminal stretch at Met1–Ala35 is a signal peptide. Tyr36, Cys56, Cys59, and His60 together coordinate heme. The chain crosses the membrane as a helical span at residues Ala286–Lys306.

Belongs to the cytochrome f family. The 4 large subunits of the cytochrome b6-f complex are cytochrome b6, subunit IV (17 kDa polypeptide, petD), cytochrome f and the Rieske protein, while the 4 small subunits are PetG, PetL, PetM and PetN. The complex functions as a dimer. It depends on heme as a cofactor.

The protein localises to the plastid. It localises to the chloroplast thylakoid membrane. Functionally, component of the cytochrome b6-f complex, which mediates electron transfer between photosystem II (PSII) and photosystem I (PSI), cyclic electron flow around PSI, and state transitions. In Nicotiana tomentosiformis (Tobacco), this protein is Cytochrome f.